The following is a 134-amino-acid chain: UPF0719 transmembrane protein YshE (134 aa).

A run of 4 helical transmembrane segments spans residues V10 to F30, A48 to I68, I78 to L98, and A114 to I134.

It belongs to the UPF0719 family.

It is found in the cell membrane. This chain is UPF0719 transmembrane protein YshE (yshE), found in Bacillus subtilis (strain 168).